The chain runs to 55 residues: Ferredoxin (55 aa).

4Fe-4S ferredoxin-type domains are found at residues 2–26 and 27–55; these read YKIT…ISEG and SIYE…VPED. The [4Fe-4S] cluster site is built by Cys8, Cys11, Cys14, Cys18, Cys36, Cys39, Cys42, and Cys46.

[4Fe-4S] cluster serves as cofactor.

Functionally, ferredoxins are iron-sulfur proteins that transfer electrons in a wide variety of metabolic reactions. The sequence is that of Ferredoxin from Butyribacterium methylotrophicum.